The following is a 488-amino-acid chain: ATP synthase subunit beta (488 aa).

Residue 164–171 participates in ATP binding; that stretch reads GGAGVGKT.

The protein belongs to the ATPase alpha/beta chains family. F-type ATPases have 2 components, CF(1) - the catalytic core - and CF(0) - the membrane proton channel. CF(1) has five subunits: alpha(3), beta(3), gamma(1), delta(1), epsilon(1). CF(0) has four main subunits: a(1), b(1), b'(1) and c(9-12).

Its subcellular location is the cellular thylakoid membrane. It catalyses the reaction ATP + H2O + 4 H(+)(in) = ADP + phosphate + 5 H(+)(out). Its function is as follows. Produces ATP from ADP in the presence of a proton gradient across the membrane. The catalytic sites are hosted primarily by the beta subunits. The sequence is that of ATP synthase subunit beta from Prochlorococcus marinus (strain MIT 9303).